We begin with the raw amino-acid sequence, 260 residues long: Thrombin-like enzyme 1 (260 aa).

The signal sequence occupies residues Met-1–Ala-18. Positions Gln-19 to Leu-24 are excised as a propeptide. One can recognise a Peptidase S1 domain in the interval Val-25–Ala-251. Intrachain disulfides connect Cys-31–Cys-165, Cys-52–Cys-68, Cys-102–Cys-258, Cys-144–Cys-212, Cys-176–Cys-191, and Cys-202–Cys-227. His-67 acts as the Charge relay system in catalysis. N-linked (GlcNAc...) asparagine glycosylation occurs at Asn-105. The Charge relay system role is filled by Asp-112. N-linked (GlcNAc...) asparagine glycosylation is found at Asn-156 and Asn-172. Ser-206 acts as the Charge relay system in catalysis. N-linked (GlcNAc...) asparagine glycosylation is present at Asn-253.

It belongs to the peptidase S1 family. Snake venom subfamily. As to quaternary structure, monomer. In terms of tissue distribution, expressed by the venom gland.

It is found in the secreted. Thrombin-like snake venom serine protease. The protein is Thrombin-like enzyme 1 of Trimeresurus albolabris (White-lipped pit viper).